Reading from the N-terminus, the 312-residue chain is Erlin (312 aa).

Topologically, residues 1–3 (MLT) are cytoplasmic. The helical transmembrane segment at 4-24 (ELALGLFALWIAIFSQALHKI) threads the bilayer. The Lumenal segment spans residues 25 to 312 (EEGHVGVYYR…FVMGTTQQTV (288 aa)). An N-linked (GlcNAc...) asparagine glycan is attached at Asn-104.

It belongs to the band 7/mec-2 family. In terms of assembly, seems to form a multimeric complex. In terms of tissue distribution, expressed in the germline only.

It is found in the endoplasmic reticulum membrane. This chain is Erlin, found in Caenorhabditis elegans.